The primary structure comprises 145 residues: D-aminoacyl-tRNA deacylase (145 aa).

The Gly-cisPro motif, important for rejection of L-amino acids signature appears at 137-138 (GP).

This sequence belongs to the DTD family. Homodimer.

The protein resides in the cytoplasm. The enzyme catalyses glycyl-tRNA(Ala) + H2O = tRNA(Ala) + glycine + H(+). It catalyses the reaction a D-aminoacyl-tRNA + H2O = a tRNA + a D-alpha-amino acid + H(+). Functionally, an aminoacyl-tRNA editing enzyme that deacylates mischarged D-aminoacyl-tRNAs. Also deacylates mischarged glycyl-tRNA(Ala), protecting cells against glycine mischarging by AlaRS. Acts via tRNA-based rather than protein-based catalysis; rejects L-amino acids rather than detecting D-amino acids in the active site. By recycling D-aminoacyl-tRNA to D-amino acids and free tRNA molecules, this enzyme counteracts the toxicity associated with the formation of D-aminoacyl-tRNA entities in vivo and helps enforce protein L-homochirality. This chain is D-aminoacyl-tRNA deacylase, found in Aeromonas hydrophila subsp. hydrophila (strain ATCC 7966 / DSM 30187 / BCRC 13018 / CCUG 14551 / JCM 1027 / KCTC 2358 / NCIMB 9240 / NCTC 8049).